The chain runs to 616 residues: Glutamine--fructose-6-phosphate aminotransferase [isomerizing] (616 aa).

Cysteine 2 (nucleophile; for GATase activity) is an active-site residue. The Glutamine amidotransferase type-2 domain maps to 2-222 (CGIIGYSGPR…QERIVALSGD (221 aa)). The tract at residues 70-89 (TGIGHTRWATHGEPSDRNAH) is disordered. SIS domains are found at residues 289–428 (IRDD…LRGF) and 461–606 (LAHW…VDRP). The active-site For Fru-6P isomerization activity is the lysine 611.

As to quaternary structure, homodimer.

The protein localises to the cytoplasm. The catalysed reaction is D-fructose 6-phosphate + L-glutamine = D-glucosamine 6-phosphate + L-glutamate. Its function is as follows. Catalyzes the first step in hexosamine metabolism, converting fructose-6P into glucosamine-6P using glutamine as a nitrogen source. The chain is Glutamine--fructose-6-phosphate aminotransferase [isomerizing] from Tropheryma whipplei (strain Twist) (Whipple's bacillus).